A 448-amino-acid chain; its full sequence is Antizyme inhibitor 1 (448 aa).

It belongs to the Orn/Lys/Arg decarboxylase class-II family. ODC antizyme inhibitor subfamily. Monomer. Interacts with OAZ1 and OAZ3; this interaction disrupts the interaction between the antizyme and ODC1. Post-translationally, ubiquitinated, leading to its proteasomal degradation; a process that is reduced in presence of antizyme OAZ1. As to expression, expressed during testis development.

Its subcellular location is the nucleus. In terms of biological role, antizyme inhibitor (AZI) protein that positively regulates ornithine decarboxylase (ODC) activity and polyamine uptake. AZI is an enzymatically inactive ODC homolog that counteracts the negative effect of ODC antizymes (AZs) OAZ1, OAZ2 and OAZ3 on ODC activity by competing with ODC for antizyme-binding. Inhibits antizyme-dependent ODC degradation and releases ODC monomers from their inactive complex with antizymes, leading to formation of the catalytically active ODC homodimer and restoring polyamine production. The polypeptide is Antizyme inhibitor 1 (Azin1) (Mus musculus (Mouse)).